Consider the following 1726-residue polypeptide: Transcription elongation factor SPT6 (1726 aa).

Acidic residues-rich tracts occupy residues 1–18, 31–45, and 55–79; these read MSDF…EFEE, EEDE…EDQD, and DDDD…SDSG. Disordered stretches follow at residues 1–196, 219–248, and 482–512; these read MSDF…KGKK, AEFD…KKQT, and EVSE…QASR. Ser90 bears the Phosphoserine mark. The span at 93–104 shows a compositional bias: acidic residues; sequence DYLDDDDLDLIE. Residues 110 to 120 show a composition bias toward basic residues; sequence KVKRRKKKYSR. 4 stretches are compositionally biased toward acidic residues: residues 146–157, 166–186, 219–240, and 484–501; these read GDGEGEVEDGEA, DEEE…DDDG, AEFD…DDES, and SEED…EEEE. Residues 502 to 512 are compositionally biased toward basic and acidic residues; that stretch reads QKGPDLKQASR. Residues 806 to 865 are a coiled coil; the sequence is LKRRNAWREDEREKKQQDVENLKKFLLSKKPHVVAVSGENRDAHMVMEDIKRTISELEQN. Residues 1204–1273 enclose the S1 motif domain; it reads WNHFDSGSCP…EKFNVDLTCR (70 aa). Residues 1316–1426 form the SH2 domain; it reads YIKRVIAHPS…LLGHKYFHEC (111 aa). Thr1522 is subject to Phosphothreonine. At Ser1525 the chain carries Phosphoserine. Residues 1611-1627 are compositionally biased toward polar residues; it reads LMTPSYSYTTPGQQQAM. The tract at residues 1611-1726 is disordered; it reads LMTPSYSYTT…ATPLLDEMDR (116 aa). Low complexity-rich tracts occupy residues 1628 to 1640 and 1647 to 1656; these read TTPQ…PQSS and SSSTPSSSSS. Polar residues predominate over residues 1657–1669; sequence RVRTPQPKASSHT.

Belongs to the SPT6 family.

It localises to the nucleus. Histone H3-H4 chaperone that plays a role in maintenance of chromatin structure during RNA polymerase II transcription elongation. Promotes the activation of the myogenic gene program by entailing erasure of the repressive H3K27me3 epigenetic mark through stabilization of the chromatin interaction of the H3K27 demethylase KDM6A. Plays an important role during early patterning and somitogenesis of the embryo. The chain is Transcription elongation factor SPT6 (supt6h) from Danio rerio (Zebrafish).